The following is a 306-amino-acid chain: Mitochondrial basic amino acids transporter (306 aa).

A run of 6 helical transmembrane segments spans residues 2 to 22, 61 to 81, 96 to 116, 153 to 172, 187 to 207, and 255 to 275; these read ALDF…GHPF, GLGS…GVQG, FLAG…MELA, GMVS…FLTY, LLVP…WLST, and LLRA…VLTY. Solcar repeat units follow at residues 2 to 86, 90 to 178, and 190 to 275; these read ALDF…TLRA, DSPL…LTRA, and PKLL…VLTY. The tract at residues 283-306 is disordered; it reads VDSEAAPGASTTPAGPALAQPSSL. A compositionally biased stretch (low complexity) spans 287 to 306; sequence AAPGASTTPAGPALAQPSSL.

Belongs to the mitochondrial carrier (TC 2.A.29) family.

The protein resides in the mitochondrion inner membrane. The catalysed reaction is L-lysine(out) + L-arginine(in) = L-lysine(in) + L-arginine(out). It catalyses the reaction L-histidine(out) + L-arginine(in) = L-histidine(in) + L-arginine(out). It carries out the reaction L-ornithine(in) + L-arginine(out) = L-ornithine(out) + L-arginine(in). The enzyme catalyses L-homoarginine(in) + L-arginine(out) = L-homoarginine(out) + L-arginine(in). The catalysed reaction is N(omega)-methyl-L-arginine(in) + L-arginine(out) = N(omega)-methyl-L-arginine(out) + L-arginine(in). It catalyses the reaction L-arginine(in) = L-arginine(out). It carries out the reaction L-lysine(in) = L-lysine(out). The enzyme catalyses L-ornithine(in) = L-ornithine(out). The catalysed reaction is L-histidine(out) = L-histidine(in). Its function is as follows. Mitochondrial transporter of arginine, lysine, homoarginine, methylarginine and, to a much lesser extent, ornithine and histidine. Does not transport carnitine nor acylcarnitines. Functions by both counter-exchange and uniport mechanisms. Plays a physiological role in the import of basic amino acids into mitochondria for mitochondrial protein synthesis and amino acid degradation. This Rattus norvegicus (Rat) protein is Mitochondrial basic amino acids transporter (Slc25a29).